The primary structure comprises 260 residues: Hydroxyethylthiazole kinase 1 (260 aa).

M39 contacts substrate. ATP-binding residues include R115 and T160. G187 lines the substrate pocket.

This sequence belongs to the Thz kinase family. Mg(2+) serves as cofactor.

It carries out the reaction 5-(2-hydroxyethyl)-4-methylthiazole + ATP = 4-methyl-5-(2-phosphooxyethyl)-thiazole + ADP + H(+). It participates in cofactor biosynthesis; thiamine diphosphate biosynthesis; 4-methyl-5-(2-phosphoethyl)-thiazole from 5-(2-hydroxyethyl)-4-methylthiazole: step 1/1. In terms of biological role, catalyzes the phosphorylation of the hydroxyl group of 4-methyl-5-beta-hydroxyethylthiazole (THZ). This chain is Hydroxyethylthiazole kinase 1, found in Streptococcus pneumoniae (strain 70585).